A 691-amino-acid polypeptide reads, in one-letter code: F-box/LRR-repeat protein 5 (691 aa).

The hemerythrin-like stretch occupies residues M1–C159. Positions 15, 57, 58, 61, 80, 126, and 130 each coordinate Fe(3+). In terms of domain architecture, F-box spans S202–L248. LRR repeat units lie at residues S340–T364, Q365–G392, C393–F418, L479–E508, T576–G607, C608–G635, and C636–Y661. Residues C662, C676, C686, and C687 each coordinate [2Fe-2S] cluster.

In terms of assembly, part of a SCF (SKP1-cullin-F-box) protein ligase complex. Interacts with ACO1/IRP1, IREB2/IRP2; the interaction depends on the [2Fe-2S] cluster. Interacts with DCTN1/p150-glued. [2Fe-2S] cluster serves as cofactor. Polybiquitinated upon iron and oxygen depletion, leading to its degradation by the proteasome. Ubiquitination is regulated by the hemerythrin-like region that acts as an oxygen and iron sensor. Undergoes constitutive ubiquitin-dependent degradation at the steady state by HERC2.

It is found in the cytoplasm. Its subcellular location is the perinuclear region. The protein resides in the nucleus. The protein operates within protein modification; protein ubiquitination. An iron-sulfur cluster promotes IRP2 polyubiquitination and degradation in response to both iron and oxygen concentrations. In terms of biological role, component of some SCF (SKP1-cullin-F-box) protein ligase complex that plays a central role in iron homeostasis by promoting the ubiquitination and subsequent degradation of IREB2/IRP2. The C-terminal domain of FBXL5 contains a redox-sensitive [2Fe-2S] cluster that, upon oxidation, promotes binding to IRP2 to effect its oxygen-dependent degradation. Under iron deficiency conditions, the N-terminal hemerythrin-like (Hr) region, which contains a diiron metal center, cannot bind iron and undergoes conformational changes that destabilize the FBXL5 protein and cause its ubiquitination and degradation. When intracellular iron levels start rising, the Hr region is stabilized. Additional increases in iron levels facilitate the assembly and incorporation of a redox active [2Fe-2S] cluster in the C-terminal domain. Only when oxygen level is high enough to maintain the cluster in its oxidized state can FBXL5 recruit IRP2 as a substrate for polyubiquination and degradation. Promotes ubiquitination and subsequent degradation of the dynactin complex component DCTN1. Within the nucleus, promotes the ubiquitination of SNAI1; preventing its interaction with DNA and promoting its degradation. Negatively regulates DNA damage response by mediating the ubiquitin-proteasome degradation of the DNA repair protein NABP2. This Pongo abelii (Sumatran orangutan) protein is F-box/LRR-repeat protein 5 (FBXL5).